The primary structure comprises 140 residues: Sex-regulated protein janus-B (140 aa).

A substrate-binding site is contributed by R42. The Proton acceptor role is filled by H69. 110–112 (SRT) is a binding site for substrate.

Belongs to the janus family. In terms of tissue distribution, germline cells of adult males.

Its function is as follows. JanA and janB regulate somatic sex differentiation. This Drosophila melanogaster (Fruit fly) protein is Sex-regulated protein janus-B (janB).